The following is a 148-amino-acid chain: uncharacterized protein (148 aa).

A compositionally biased stretch (polar residues) spans 1–17; it reads MEGLQRSTISFRRQGSS. Positions 1-148 are disordered; the sequence is MEGLQRSTIS…SRRRIVTKKR (148 aa). Composition is skewed to basic and acidic residues over residues 36-47 and 58-67; these read EQKDESQRDEQP and KPIDEKDKLR. Ser100 and Ser107 each carry phosphoserine. The segment covering 128 to 148 has biased composition (basic residues); the sequence is VNPRKRPPKRRSRRRIVTKKR.

This is an uncharacterized protein from Arabidopsis thaliana (Mouse-ear cress).